The following is a 163-amino-acid chain: ATP synthase subunit b (163 aa).

A helical transmembrane segment spans residues 9-29; that stretch reads GLLIAQLINVVFVVWLLTTFL.

Belongs to the ATPase B chain family. F-type ATPases have 2 components, F(1) - the catalytic core - and F(0) - the membrane proton channel. F(1) has five subunits: alpha(3), beta(3), gamma(1), delta(1), epsilon(1). F(0) has four main subunits: a(1), b(2) and c(10-14). The alpha and beta chains form an alternating ring which encloses part of the gamma chain. F(1) is attached to F(0) by a central stalk formed by the gamma and epsilon chains, while a peripheral stalk is formed by the delta and b chains.

The protein resides in the cell membrane. In terms of biological role, f(1)F(0) ATP synthase produces ATP from ADP in the presence of a proton or sodium gradient. F-type ATPases consist of two structural domains, F(1) containing the extramembraneous catalytic core and F(0) containing the membrane proton channel, linked together by a central stalk and a peripheral stalk. During catalysis, ATP synthesis in the catalytic domain of F(1) is coupled via a rotary mechanism of the central stalk subunits to proton translocation. Its function is as follows. Component of the F(0) channel, it forms part of the peripheral stalk, linking F(1) to F(0). The chain is ATP synthase subunit b from Roseiflexus castenholzii (strain DSM 13941 / HLO8).